Reading from the N-terminus, the 273-residue chain is Elongation factor Ts (273 aa).

Residues 80 to 83 (TDFV) form an involved in Mg(2+) ion dislocation from EF-Tu region.

The protein belongs to the EF-Ts family.

The protein localises to the cytoplasm. Associates with the EF-Tu.GDP complex and induces the exchange of GDP to GTP. It remains bound to the aminoacyl-tRNA.EF-Tu.GTP complex up to the GTP hydrolysis stage on the ribosome. This is Elongation factor Ts from Tropheryma whipplei (strain Twist) (Whipple's bacillus).